Consider the following 218-residue polypeptide: Nucleoid occlusion factor SlmA (218 aa).

In terms of domain architecture, HTH tetR-type spans 30 to 90; sequence ERRQQVLTVL…ALIEHIESTL (61 aa). Positions 53 to 72 form a DNA-binding region, H-T-H motif; it reads TTARLAKEVGVSEAALYRYF.

It belongs to the nucleoid occlusion factor SlmA family. Homodimer. Interacts with FtsZ.

The protein resides in the cytoplasm. It is found in the nucleoid. Its function is as follows. Required for nucleoid occlusion (NO) phenomenon, which prevents Z-ring formation and cell division over the nucleoid. Acts as a DNA-associated cell division inhibitor that binds simultaneously chromosomal DNA and FtsZ, and disrupts the assembly of FtsZ polymers. SlmA-DNA-binding sequences (SBS) are dispersed on non-Ter regions of the chromosome, preventing FtsZ polymerization at these regions. The polypeptide is Nucleoid occlusion factor SlmA (Haemophilus influenzae (strain PittGG)).